Here is a 705-residue protein sequence, read N- to C-terminus: Polyribonucleotide nucleotidyltransferase (705 aa).

Residues Asp486 and Asp492 each coordinate Mg(2+). Residues 553 to 612 form the KH domain; sequence PRIIKFKINPEKIRDVIGKGGAVIRALTEETGTTIDISDDGSVTIASISNEGGEQAKRRI. In terms of domain architecture, S1 motif spans 622–690; that stretch reads GKIYEGTVLK…DKGRLRLSMK (69 aa).

Belongs to the polyribonucleotide nucleotidyltransferase family. Requires Mg(2+) as cofactor.

It is found in the cytoplasm. It carries out the reaction RNA(n+1) + phosphate = RNA(n) + a ribonucleoside 5'-diphosphate. Involved in mRNA degradation. Catalyzes the phosphorolysis of single-stranded polyribonucleotides processively in the 3'- to 5'-direction. This is Polyribonucleotide nucleotidyltransferase from Nitrosomonas eutropha (strain DSM 101675 / C91 / Nm57).